The chain runs to 495 residues: Leucine aminopeptidase 2 (495 aa).

The first 21 residues, 1–21 (MKTQLLSLGVALTAISQGVIA), serve as a signal peptide directing secretion. In terms of domain architecture, PA spans 124 to 218 (PPADKITAEL…ADGKNLASLV (95 aa)). Residues asparagine 142 and asparagine 235 are each glycosylated (N-linked (GlcNAc...) asparagine). Residues histidine 259 and aspartate 271 each contribute to the Zn(2+) site. The N-linked (GlcNAc...) asparagine glycan is linked to asparagine 272. The active-site Proton acceptor is glutamate 303. The Zn(2+) site is built by glutamate 304 and aspartate 332. The N-linked (GlcNAc...) asparagine glycan is linked to asparagine 352. Position 430 (histidine 430) interacts with Zn(2+). The interval 464–495 (GFPTRPKTGKRDVSPRGQSMPGGGCGHHSVFM) is disordered.

Belongs to the peptidase M28 family. M28A subfamily. In terms of assembly, monomer. It depends on Zn(2+) as a cofactor.

The protein localises to the secreted. Extracellular aminopeptidase that releases a wide variety of amino acids from natural peptides and contributes to pathogenicity. This is Leucine aminopeptidase 2 (LAP2) from Arthroderma otae (strain ATCC MYA-4605 / CBS 113480) (Microsporum canis).